Consider the following 158-residue polypeptide: Cyclic pyranopterin monophosphate synthase (158 aa).

Substrate-binding positions include 76 to 78 and 114 to 115; these read LCH and ME. Asp-129 is an active-site residue.

This sequence belongs to the MoaC family. As to quaternary structure, homohexamer; trimer of dimers.

It carries out the reaction (8S)-3',8-cyclo-7,8-dihydroguanosine 5'-triphosphate = cyclic pyranopterin phosphate + diphosphate. Its pathway is cofactor biosynthesis; molybdopterin biosynthesis. Functionally, catalyzes the conversion of (8S)-3',8-cyclo-7,8-dihydroguanosine 5'-triphosphate to cyclic pyranopterin monophosphate (cPMP). The protein is Cyclic pyranopterin monophosphate synthase of Shewanella piezotolerans (strain WP3 / JCM 13877).